The primary structure comprises 404 residues: Probable eukaryotic initiation factor 4A (404 aa).

Residues 1–28 (MAQQGKVEPQDQDSFLDDQPGIRPIPSF) are disordered. Residues 26 to 54 (PSFDDMPLHQNLLRGIYSHGFEKPSSIQQ) carry the Q motif motif. The Helicase ATP-binding domain maps to 57–231 (IVPFTRGGDI…KKFMRDPTRI (175 aa)). 70–77 (AQSGTGKT) is a binding site for ATP. The DEAD box motif lies at 179 to 182 (DEAD). The 161-residue stretch at 242–402 (GIKQFFIAVE…ELPVDFAAYL (161 aa)) folds into the Helicase C-terminal domain.

Belongs to the DEAD box helicase family. eIF4A subfamily. As to quaternary structure, eIF4F is a multi-subunit complex, the composition of which varies with external and internal environmental conditions. It is composed of at least EIF4A, EIF4E and EIF4G.

It carries out the reaction ATP + H2O = ADP + phosphate + H(+). ATP-dependent RNA helicase which is a subunit of the eIF4F complex involved in cap recognition and is required for mRNA binding to ribosome. In the current model of translation initiation, eIF4A unwinds RNA secondary structures in the 5'-UTR of mRNAs which is necessary to allow efficient binding of the small ribosomal subunit, and subsequent scanning for the initiator codon. This is Probable eukaryotic initiation factor 4A from Trypanosoma brucei brucei (strain 927/4 GUTat10.1).